An 88-amino-acid chain; its full sequence is Phosphoribosyl-ATP pyrophosphatase (88 aa).

Belongs to the PRA-PH family.

Its subcellular location is the cytoplasm. The enzyme catalyses 1-(5-phospho-beta-D-ribosyl)-ATP + H2O = 1-(5-phospho-beta-D-ribosyl)-5'-AMP + diphosphate + H(+). The protein operates within amino-acid biosynthesis; L-histidine biosynthesis; L-histidine from 5-phospho-alpha-D-ribose 1-diphosphate: step 2/9. The sequence is that of Phosphoribosyl-ATP pyrophosphatase from Cutibacterium acnes (strain DSM 16379 / KPA171202) (Propionibacterium acnes).